Consider the following 700-residue polypeptide: Sex comb on midleg-like protein 2 (700 aa).

Residues 1–33 (MGQTVNEDSMDVKKENQEKTPQSSTSSVQRDDF) form a disordered region. Polar residues predominate over residues 19–28 (KTPQSSTSSV). 2 MBT repeats span residues 33–131 (FHWE…LQPP) and 139–240 (SSWP…LQPP). Polar residues predominate over residues 253 to 281 (TESSPSEASQHSMQSPQKTTLILPTQQVR). 2 disordered regions span residues 253 to 320 (TESS…EKPL) and 466 to 550 (PFSS…SSLN). A phosphoserine mark is found at S256, S261, S267, S299, and S300. T305 is subject to Phosphothreonine. Over residues 476 to 495 (SSAEHDKNQSAKEDVTERQS) the composition is skewed to basic and acidic residues. S499 is subject to Phosphoserine. T503 is modified (phosphothreonine). S511 carries the post-translational modification Phosphoserine. A Glycyl lysine isopeptide (Lys-Gly) (interchain with G-Cter in SUMO2) cross-link involves residue K518. S522 is modified (phosphoserine). A compositionally biased stretch (basic and acidic residues) spans 535–545 (PKEENLSEDSK). Residue K536 forms a Glycyl lysine isopeptide (Lys-Gly) (interchain with G-Cter in SUMO2) linkage. Residues S570, S583, S590, and S594 each carry the phosphoserine modification. Residues 575–584 (RSVPGTTSSP) show a composition bias toward polar residues. The segment at 575–594 (RSVPGTTSSPLVGDISPKSS) is disordered. Glycyl lysine isopeptide (Lys-Gly) (interchain with G-Cter in SUMO2) cross-links involve residues K599 and K605. The SAM domain occupies 631-700 (WSVDEVIQFM…IEKLKEGKYS (70 aa)).

Belongs to the SCM family. Highly expressed in placenta, thymus and testis. Detected at lower levels in brain, liver, skeletal muscle, pancreas and ovary.

The protein resides in the nucleus. Putative Polycomb group (PcG) protein. PcG proteins act by forming multiprotein complexes, which are required to maintain the transcriptionally repressive state of homeotic genes throughout development. This is Sex comb on midleg-like protein 2 (SCML2) from Homo sapiens (Human).